The chain runs to 564 residues: Dihydropyrimidinase-related protein 5 (564 aa).

Thr-509 and Thr-514 each carry phosphothreonine. A phosphoserine mark is found at Ser-532 and Ser-538. Arg-559 is subject to Omega-N-methylarginine.

The protein belongs to the metallo-dependent hydrolases superfamily. Hydantoinase/dihydropyrimidinase family. Homotetramer, and heterotetramer with other DPYS-like proteins. Interacts with DPYSL2, DPYSL3 and DPYSL4. Interacts with SEPTIN4 isoform 4. Interacts with MAP2 and TUBB3. Detected in brain.

The protein localises to the cytoplasm. In terms of biological role, involved in the negative regulation of dendrite outgrowth. The sequence is that of Dihydropyrimidinase-related protein 5 (Dpysl5) from Mus musculus (Mouse).